The chain runs to 326 residues: tRNA uridine(34) hydroxylase (326 aa).

The Rhodanese domain maps to 123–217; it reads ADPEVFVVDT…YLEEVPQEES (95 aa). Residue Cys177 is the Cysteine persulfide intermediate of the active site. Residues 278–288 are compositionally biased toward basic and acidic residues; it reads QVERFREREKQ. Residues 278–326 are disordered; sequence QVERFREREKQVSLANQRGEQHVGGESAKQRAQRREAKLAKKAAQRKQA. Residues 317–326 show a composition bias toward basic residues; that stretch reads AKKAAQRKQA.

This sequence belongs to the TrhO family.

It catalyses the reaction uridine(34) in tRNA + AH2 + O2 = 5-hydroxyuridine(34) in tRNA + A + H2O. Functionally, catalyzes oxygen-dependent 5-hydroxyuridine (ho5U) modification at position 34 in tRNAs. The sequence is that of tRNA uridine(34) hydroxylase from Vibrio parahaemolyticus serotype O3:K6 (strain RIMD 2210633).